Here is a 198-residue protein sequence, read N- to C-terminus: Recombination protein RecR (198 aa).

The C4-type zinc-finger motif lies at 58–73 (CSICGNFTDSDPCAIC). The Toprim domain occupies 81–175 (SIICVIEEPK…KVTRIAHGIP (95 aa)).

It belongs to the RecR family.

In terms of biological role, may play a role in DNA repair. It seems to be involved in an RecBC-independent recombinational process of DNA repair. It may act with RecF and RecO. The chain is Recombination protein RecR from Clostridium kluyveri (strain NBRC 12016).